We begin with the raw amino-acid sequence, 91 residues long: Glycophorin-B (91 aa).

The signal sequence occupies residues 1–19 (MYGKIIFVLLLSEIVSISA). Residues 20–59 (LSTTEVAMHTSTSSSVTKSYISSQTNGETGQLVHRFTVPA) are Extracellular-facing. Threonine 36 carries an O-linked (GalNAc...) threonine glycan. O-linked (GalNAc...) serine glycosylation is present at serine 38. A helical transmembrane segment spans residues 60–81 (PVVIILIILCVMAGIIGTILLI). The Cytoplasmic portion of the chain corresponds to 82 to 91 (SYSIRRLIKA).

This sequence belongs to the glycophorin-A family. As to quaternary structure, component of the ankyrin-1 complex in the erythrocyte, composed of ANK1, RHCE, RHAG, SLC4A1, EPB42, GYPA, GYPB and AQP1. Interacts (via the N-terminal) with RHAG; this interaction bridges the (RHAG)2(RHCE) heterotrimer with the SLC4A1 Band 3 I dimer complexed with GYPA. Post-translationally, the N-terminal extracellular domain is heavily glycosylated on serine and threonine residues.

Its subcellular location is the cell membrane. Functionally, component of the ankyrin-1 complex, a multiprotein complex involved in the stability and shape of the erythrocyte membrane. The chain is Glycophorin-B from Homo sapiens (Human).